Consider the following 177-residue polypeptide: Nucleoside triphosphate/diphosphate phosphatase (177 aa).

Arg-23 (proton donor) is an active-site residue. 6 residues coordinate Mg(2+): Asn-87, Asp-103, Asp-105, Asp-107, Asp-120, and Glu-123.

Belongs to the Ntdp family. Requires Mg(2+) as cofactor.

It catalyses the reaction a ribonucleoside 5'-triphosphate + H2O = a ribonucleoside 5'-diphosphate + phosphate + H(+). It carries out the reaction a ribonucleoside 5'-diphosphate + H2O = a ribonucleoside 5'-phosphate + phosphate + H(+). Functionally, has nucleoside phosphatase activity towards nucleoside triphosphates and nucleoside diphosphates. The polypeptide is Nucleoside triphosphate/diphosphate phosphatase (Streptococcus thermophilus (strain ATCC BAA-491 / LMD-9)).